A 161-amino-acid polypeptide reads, in one-letter code: Nucleotide-binding protein lpl1175 (161 aa).

The protein belongs to the YajQ family.

Nucleotide-binding protein. The polypeptide is Nucleotide-binding protein lpl1175 (Legionella pneumophila (strain Lens)).